A 190-amino-acid polypeptide reads, in one-letter code: Peptidyl-tRNA hydrolase (190 aa).

Phe14 contributes to the tRNA binding site. Catalysis depends on His19, which acts as the Proton acceptor. TRNA-binding residues include Met64, Asn66, and Asn112.

Belongs to the PTH family. Monomer.

The protein resides in the cytoplasm. The catalysed reaction is an N-acyl-L-alpha-aminoacyl-tRNA + H2O = an N-acyl-L-amino acid + a tRNA + H(+). In terms of biological role, hydrolyzes ribosome-free peptidyl-tRNAs (with 1 or more amino acids incorporated), which drop off the ribosome during protein synthesis, or as a result of ribosome stalling. Its function is as follows. Catalyzes the release of premature peptidyl moieties from peptidyl-tRNA molecules trapped in stalled 50S ribosomal subunits, and thus maintains levels of free tRNAs and 50S ribosomes. This Staphylococcus epidermidis (strain ATCC 35984 / DSM 28319 / BCRC 17069 / CCUG 31568 / BM 3577 / RP62A) protein is Peptidyl-tRNA hydrolase.